Reading from the N-terminus, the 123-residue chain is U7 snRNA-associated Sm-like protein LSm10 (123 aa).

A Sm domain is found at 16–88; the sequence is SLIILLQGLQ…VRYVHIPDDV (73 aa).

It belongs to the snRNP Sm proteins family. Component of the heptameric ring U7 snRNP complex, or U7 Sm protein core complex, at least composed of LSM10, LSM11, SNRPB, SNRPD3, SNRPE, SNRPF, SNRPG and U7 snRNA. Formation of the U7 snRNP is an ATP-dependent process mediated by a specialized SMN complex containing at least the Sm protein core complex and additionally, the U7-specific LSM10 and LSM11 proteins. Interacts with CLNS1A and SMN. Not methylated. Methylation is not necessary for interaction with SMN.

Its subcellular location is the nucleus. Appears to function in the U7 snRNP complex that is involved in histone 3'-end processing. Increases U7 snRNA levels but not histone 3'-end pre-mRNA processing activity, when overexpressed. Required for cell cycle progression from G1 to S phases. Binds specifically to U7 snRNA. Binds to the downstream cleavage product (DCP) of histone pre-mRNA in a U7 snRNP dependent manner. This is U7 snRNA-associated Sm-like protein LSm10 (LSM10) from Homo sapiens (Human).